The following is a 238-amino-acid chain: Synapse differentiation-inducing gene protein 1-like (238 aa).

Disordered stretches follow at residues 1-24, 78-111, and 126-155; these read MESL…GPYP, KVKE…PGQA, and EEFQ…NFLT. Residues 1 to 162 lie on the Extracellular side of the membrane; it reads MESLSELQNP…FLTLPPRDHL (162 aa). Positions 133–151 are enriched in acidic residues; sequence GDPEEEESDATSTESESED. A helical transmembrane segment spans residues 163–183; the sequence is GLTIFSMLCCFWPLGIAAFYF. At 184-205 the chain is on the cytoplasmic side; it reads SQGTSKAISKGDFRLANTTSRR. Residues 206 to 226 form a helical membrane-spanning segment; the sequence is ALFLATLSIAVGAGLYVAVVV. Residues 227–238 lie on the Extracellular side of the membrane; it reads ALAAYMSQNGHS.

Belongs to the CD225/Dispanin family.

It is found in the membrane. Its subcellular location is the golgi apparatus. It localises to the cis-Golgi network. The polypeptide is Synapse differentiation-inducing gene protein 1-like (SYNDIG1L) (Bos taurus (Bovine)).